The primary structure comprises 506 residues: MAP kinase kinase MKK2/SSP33 (506 aa).

Residues 1-69 (MASMFRPPES…TSTTSSMASN (69 aa)) form a disordered region. Polar residues predominate over residues 26 to 52 (LVQNAKSTNDGQHLNRSPYSSVNESPY). A compositionally biased stretch (low complexity) spans 53-69 (SNNSTSATSTTSSMASN). The 268-residue stretch at 214-481 (ITTLGILGEG…PRQMLKHPWI (268 aa)) folds into the Protein kinase domain. Residues 220–228 (LGEGAGGSV) and Lys243 each bind ATP. The Proton acceptor role is filled by Asp342.

This sequence belongs to the protein kinase superfamily. STE Ser/Thr protein kinase family. MAP kinase kinase subfamily.

The catalysed reaction is L-seryl-[protein] + ATP = O-phospho-L-seryl-[protein] + ADP + H(+). The enzyme catalyses L-threonyl-[protein] + ATP = O-phospho-L-threonyl-[protein] + ADP + H(+). It catalyses the reaction L-tyrosyl-[protein] + ATP = O-phospho-L-tyrosyl-[protein] + ADP + H(+). Functionally, serine/threonine protein kinase involved in a signal transduction pathway that plays a role in yeast cell morphogenesis and cell growth. This pathway seems to start by SMP3; then involves the kinase PKC1 that may act on the BCK1 kinase that then phosphorylates MKK1 and MKK2 which themselves phosphorylate the MPK1 kinase. This is MAP kinase kinase MKK2/SSP33 (MKK2) from Saccharomyces cerevisiae (strain ATCC 204508 / S288c) (Baker's yeast).